The following is a 508-amino-acid chain: Maturase K (508 aa).

It belongs to the intron maturase 2 family. MatK subfamily.

The protein resides in the plastid. It is found in the chloroplast. Usually encoded in the trnK tRNA gene intron. Probably assists in splicing its own and other chloroplast group II introns. In Huidobria chilensis (Loasa chilensis), this protein is Maturase K.